An 882-amino-acid polypeptide reads, in one-letter code: Liprin-beta-2 (882 aa).

Positions 101-303 (AASNETYQER…DKDRRIEELT (203 aa)) form a coiled coil. Phosphoserine is present on residues S328, S362, and S386. The tract at residues 339-554 (RKWNTTNKSP…SRTRDTKGQK (216 aa)) is disordered. Basic and acidic residues predominate over residues 388-399 (EDLRRESGDKCV). 2 stretches are compositionally biased toward polar residues: residues 442-457 (PTAS…SQPK) and 481-495 (SSAS…QSPV). Residues S502 and S518 each carry the phosphoserine modification. Residues 502–515 (SPKGIKKFWGKIRR) show a composition bias toward basic residues. 3 SAM domains span residues 564–628 (WSTE…INAK), 636–699 (LDHI…LHVN), and 724–789 (WSNH…KFNA).

It belongs to the liprin family. Liprin-beta subfamily. In terms of assembly, forms homodimers and heterodimers. In terms of tissue distribution, expressed widely. Strong expression in liver, kidney, intestine, heart, lung and testis. Low expression in brain and thymus.

Its function is as follows. May regulate the disassembly of focal adhesions. Did not bind receptor-like tyrosine phosphatases type 2A. This Mus musculus (Mouse) protein is Liprin-beta-2 (Ppfibp2).